Here is a 154-residue protein sequence, read N- to C-terminus: Holo-[acyl-carrier-protein] synthase (154 aa).

Asp-8 and Glu-57 together coordinate Mg(2+).

This sequence belongs to the P-Pant transferase superfamily. AcpS family. The cofactor is Mg(2+).

It localises to the cytoplasm. It carries out the reaction apo-[ACP] + CoA = holo-[ACP] + adenosine 3',5'-bisphosphate + H(+). In terms of biological role, transfers the 4'-phosphopantetheine moiety from coenzyme A to a Ser of acyl-carrier-protein. This chain is Holo-[acyl-carrier-protein] synthase, found in Nitrosococcus oceani (strain ATCC 19707 / BCRC 17464 / JCM 30415 / NCIMB 11848 / C-107).